Consider the following 351-residue polypeptide: Tsukushi-A (351 aa).

Residues 1 to 17 (MALSSWIFFLLVHGIVG) form the signal peptide. LRR repeat units follow at residues 59–82 (PLDTSYLDLSSNRLKRINESVLSG), 85–108 (YTTLMNLNLSYNQIVKISYSTFSK), 109–132 (LRYLESLDLSHNLLETLPDGSFLY), 134–155 (RLTELDLSSNKIQKVGVGAFTL), 158–181 (QGRSMTINLANNEIHSIFRGAERP), 182–203 (VPNIHSLMLYGNQLLSVPDLHG), 204–226 (IPLRHLNLDRNPLSKIEKVSFLG), 252–276 (LTSLLELDLSNNPNLKSLSSDMFFG), and 277–300 (LKALQELNLAYSGVASLPKDIMLH).

As to quaternary structure, interacts with bmp4. Interacts with dll1 (via extracellular region). Interacts with fgf8; inhibits fgf8 signaling. Interacts with nodal2/Xnr2; enhances nodal2 activity. In terms of tissue distribution, during embryogenesis, localized to the animal hemisphere during late blastula and gastrula stages. At stage 10, expression is also detected around the dorsal blastopore lip. Expressed in the mandibular crest segment, branchial crest segment and differentiating somites at stage 21/22. Expressed in the germ ring including the shield at shield stage and in the tailbud at the 10-somite stage. At the early neurula stage (stage 13), expression is hardly detectable in the presumptive neural plate region, and restricted to the non-neural ectoderm where its levels increase by stage 14, especially in the presumptive anterior neural fold. Also expressed in the prospective cranial neural crest. At the early tailbud stage (stage 23), expressed in cranial neural crest cells, the dorsal retina and the lens placode.

It is found in the secreted. Functionally, contributes to various developmental events through its interactions with multiple signaling pathways. Dorsalizing factor which functions as an inhibitor of bone morphogenetic proteins (BMP) during gastrulation. Promotes dll1-dependent activation of Notch signaling and is required for neural crest formation. Induces endoderm and dorsal mesoderm formation by enhancing nodal2/Xnr2 activity while inhibiting ventrolateral mesoderm formation through inhibition of fgf8. This chain is Tsukushi-A, found in Xenopus laevis (African clawed frog).